A 156-amino-acid polypeptide reads, in one-letter code: Small ribosomal subunit protein uS7c (156 aa).

The protein belongs to the universal ribosomal protein uS7 family. In terms of assembly, part of the 30S ribosomal subunit.

The protein resides in the plastid. It localises to the chloroplast. One of the primary rRNA binding proteins, it binds directly to 16S rRNA where it nucleates assembly of the head domain of the 30S subunit. The protein is Small ribosomal subunit protein uS7c (rps7) of Nephroselmis olivacea (Green alga).